Here is a 129-residue protein sequence, read N- to C-terminus: L-ectoine synthase (129 aa).

It belongs to the ectoine synthase family.

It carries out the reaction (2S)-4-acetamido-2-aminobutanoate = L-ectoine + H2O. The protein operates within amine and polyamine biosynthesis; ectoine biosynthesis; L-ectoine from L-aspartate 4-semialdehyde: step 3/3. Functionally, catalyzes the circularization of gamma-N-acetyl-alpha,gamma-diaminobutyric acid (ADABA) to ectoine (1,4,5,6-tetrahydro-2-methyl-4-pyrimidine carboxylic acid), which is an excellent osmoprotectant. The sequence is that of L-ectoine synthase from Halalkalibacterium halodurans (strain ATCC BAA-125 / DSM 18197 / FERM 7344 / JCM 9153 / C-125) (Bacillus halodurans).